The primary structure comprises 344 residues: Biotin synthase (344 aa).

Residues 40-267 (AEVQVSTLLS…KSMVRLSAGR (228 aa)) form the Radical SAM core domain. [4Fe-4S] cluster contacts are provided by Cys55, Cys59, and Cys62. [2Fe-2S] cluster-binding residues include Cys99, Cys130, Cys190, and Arg262.

Belongs to the radical SAM superfamily. Biotin synthase family. In terms of assembly, homodimer. It depends on [4Fe-4S] cluster as a cofactor. [2Fe-2S] cluster is required as a cofactor.

It catalyses the reaction (4R,5S)-dethiobiotin + (sulfur carrier)-SH + 2 reduced [2Fe-2S]-[ferredoxin] + 2 S-adenosyl-L-methionine = (sulfur carrier)-H + biotin + 2 5'-deoxyadenosine + 2 L-methionine + 2 oxidized [2Fe-2S]-[ferredoxin]. Its pathway is cofactor biosynthesis; biotin biosynthesis; biotin from 7,8-diaminononanoate: step 2/2. Functionally, catalyzes the conversion of dethiobiotin (DTB) to biotin by the insertion of a sulfur atom into dethiobiotin via a radical-based mechanism. The sequence is that of Biotin synthase from Xanthomonas oryzae pv. oryzae (strain PXO99A).